Consider the following 132-residue polypeptide: Small ribosomal subunit protein uS8 (132 aa).

This sequence belongs to the universal ribosomal protein uS8 family. In terms of assembly, part of the 30S ribosomal subunit. Contacts proteins S5 and S12.

In terms of biological role, one of the primary rRNA binding proteins, it binds directly to 16S rRNA central domain where it helps coordinate assembly of the platform of the 30S subunit. The polypeptide is Small ribosomal subunit protein uS8 (Clostridium tetani (strain Massachusetts / E88)).